A 651-amino-acid chain; its full sequence is MALIRLVAPERVFSDLASMVAYPNFQVQDKITLLGSAGGDFTFTTTASVVDNGTVFAVPGGYLLRKFVGPAYSSWFSNWTGIVTFMSAPNRHLVVDTVLQATSVLNIKSNSTLEFTDTGRILPDAAVARQVLNITGSAPSVFVPLAADAAAGSKVITVAAGALSAVKGTYLYLRSNKLCDGGPNTYGVKISQIRKVVGVSTSGGVTSIRLDKALHYNYYLSDAAEVGIPTMVENVTLVSPYINEFGYDDLNRFFTSGISANFAADLHIQDGVIIGNKRPGASDIEGRSAIKFNNCVDSTVKGTCFYNIGWYGVEVLGCSEDTEVHDIHAMDVRHAISLNWQSTADGDKWGEPIEFLGVNCEAYSTTQAGFDTHDIGKRVKFVRCVSYDSADDGFQARTNGVEYLNCRAYRAAMDGFASNTGVAFPIYRECLAYDNVRSGFNCSYGGGYVYDCEAHGSQNGVRINGGRVKGGRYTRNSSSHIFVTKDVAETAQTSLEIDGVSMRYDGTGRAVYFHGTVGIDPTLVSMSNNDMTGHGLFWALLSGYTVQPTPPRMSRNLLDDTGIRGVATLVAGEATVNARVRGNFGSVANSFKWVSEVKLTRLTFPSSAGALTVTSVAQNQDVPTPNPDLNSFVIRSSNAADVSQVAWEVYL.

An interaction with the host capsular trisaccharides region spans residues 71-559; that stretch reads AYSSWFSNWT…PPRMSRNLLD (489 aa). Substrate-binding residues include Gln130, Lys177, Asn217, Lys291, Glu314, Asn339, Trp340, and Arg378.

This sequence belongs to the K1-specific depolymerase family. In terms of assembly, homotrimer.

It localises to the virion. Functionally, functions as a receptor binding protein (RBP) and mediates the attachment to the host capsular exopolysaccharides. Displays a lyase activity that specifically degrades the K1-type polysaccharides of Klebsiella pneumoniae capsule. This chain is Depolymerase, capsule K1-specific, found in Klebsiella pneumoniae (Bacteriophage NTUH-K2044-K1-1).